The primary structure comprises 417 residues: Proteasome-activating nucleotidase (417 aa).

Residues 24-78 (SKYLLDRVKQLEERNVRLKEEYRKIELEKKSVENKKVQYEREIRKLTSELDRLKT) are a coiled coil. Residues 203-208 (GTGKTL) and histidine 342 each bind ATP. The tract at residues 415 to 417 (MFA) is docks into pockets in the proteasome alpha-ring to cause gate opening.

It belongs to the AAA ATPase family. In terms of assembly, homohexamer. The hexameric complex has a two-ring architecture resembling a top hat that caps the 20S proteasome core at one or both ends. Upon ATP-binding, the C-terminus of PAN interacts with the alpha-rings of the proteasome core by binding to the intersubunit pockets.

The protein localises to the cytoplasm. ATPase which is responsible for recognizing, binding, unfolding and translocation of substrate proteins into the archaeal 20S proteasome core particle. Is essential for opening the gate of the 20S proteasome via an interaction with its C-terminus, thereby allowing substrate entry and access to the site of proteolysis. Thus, the C-termini of the proteasomal ATPase function like a 'key in a lock' to induce gate opening and therefore regulate proteolysis. Unfolding activity requires energy from ATP hydrolysis, whereas ATP binding alone promotes ATPase-20S proteasome association which triggers gate opening, and supports translocation of unfolded substrates. This is Proteasome-activating nucleotidase from Methanocella arvoryzae (strain DSM 22066 / NBRC 105507 / MRE50).